Consider the following 54-residue polypeptide: ATP synthase protein 8 (54 aa).

Residues 9–29 (WIINFFIVWTADFTLLIVLSI) traverse the membrane as a helical segment.

It belongs to the ATPase protein 8 family. As to quaternary structure, F-type ATPases have 2 components, CF(1) - the catalytic core - and CF(0) - the membrane proton channel.

Its subcellular location is the mitochondrion membrane. In terms of biological role, mitochondrial membrane ATP synthase (F(1)F(0) ATP synthase or Complex V) produces ATP from ADP in the presence of a proton gradient across the membrane which is generated by electron transport complexes of the respiratory chain. F-type ATPases consist of two structural domains, F(1) - containing the extramembraneous catalytic core and F(0) - containing the membrane proton channel, linked together by a central stalk and a peripheral stalk. During catalysis, ATP synthesis in the catalytic domain of F(1) is coupled via a rotary mechanism of the central stalk subunits to proton translocation. Part of the complex F(0) domain. Minor subunit located with subunit a in the membrane. This Arbacia lixula (Black urchin) protein is ATP synthase protein 8 (MT-ATP8).